The chain runs to 202 residues: LexA repressor (202 aa).

Positions 28 to 48 (RAEIAQRLGFRSPNAAEEHLK) form a DNA-binding region, H-T-H motif. Catalysis depends on for autocatalytic cleavage activity residues Ser119 and Lys156.

The protein belongs to the peptidase S24 family. Homodimer.

The enzyme catalyses Hydrolysis of Ala-|-Gly bond in repressor LexA.. Represses a number of genes involved in the response to DNA damage (SOS response), including recA and lexA. Binds to the 16 bp palindromic sequence 5'-CTGTATATATATACAG-3'. In the presence of single-stranded DNA, RecA interacts with LexA causing an autocatalytic cleavage which disrupts the DNA-binding part of LexA, leading to derepression of the SOS regulon and eventually DNA repair. This Edwardsiella ictaluri (strain 93-146) protein is LexA repressor.